The primary structure comprises 288 residues: MADDTPIIEEIAEQNESVTRIMQRLKHDMQRVTSVPGFNTSAAGVNDLIDILNQYKKELEDDAANDYTEAHIHKIRLVTGKRNQYVLKLKQAEDEYHARKEQARRRASSMDFTVGRNSTNLVDYSHGRHHMPSYRRHDSSDEENYSMDGTNGDGNRAGPSNPDRGNRTGPSSSDRVRMRAGRNRVTKTRRYRPGQKALEEIRKYQKTEDLLIQKAPFARLVREIMQTSTPFGADCRIRSDAISALQEAAEAFLVEMFEGSSLISTHAKRVTLMTTDIQLYRRLCLRHL.

The tract at residues 96 to 194 is disordered; the sequence is YHARKEQARR…VTKTRRYRPG (99 aa). Positions 178 to 193 are enriched in basic residues; the sequence is MRAGRNRVTKTRRYRP. Residues 191 to 288 form an H3-like region; the sequence is YRPGQKALEE…LYRRLCLRHL (98 aa).

This sequence belongs to the histone H3 family. In terms of assembly, forms a nucleosome-like histone octamer containing two molecules each of H2A, H2B, hcp-3 and H4 assembled in one hcp-3-H4 heterotetramer and two H2A-H2B heterodimers. The hcp-3-H4 heterotetramer is more compact and structurally more rigid than corresponding H3-H4 heterotetramers. Interacts with knl-2. Interacts with lin-53.

The protein localises to the nucleus. It is found in the chromosome. It localises to the centromere. Its subcellular location is the kinetochore. Histone H3-like variant which exclusively replaces conventional H3 in the nucleosome core of centromeric chromatin at the inner plate of the kinetochore. Required for recruitment and assembly of kinetochore proteins, mitotic progression and chromosome segregation. May serve as an epigenetic mark that propagates centromere identity through replication and cell division. Might promote cleavage furrow stability during cytokinesis. Not required for chromosome segregation during meiosis. This is Histone H3-like centromeric protein hcp-3 from Caenorhabditis elegans.